The chain runs to 96 residues: uncharacterized protein (96 aa).

Residues 9–86 are a coiled coil; the sequence is EELKSQAQVY…NKYADTVAER (78 aa).

The protein belongs to the WXG100 family. sagEsxA-like subfamily.

This is an uncharacterized protein from Clostridium acetobutylicum (strain ATCC 824 / DSM 792 / JCM 1419 / IAM 19013 / LMG 5710 / NBRC 13948 / NRRL B-527 / VKM B-1787 / 2291 / W).